Here is a 95-residue protein sequence, read N- to C-terminus: Turripeptide OL184 (95 aa).

Post-translationally, contains 5 disulfide bonds. As to expression, expressed by the venom duct.

The protein localises to the secreted. Its function is as follows. Acts as a neurotoxin by inhibiting an ion channel. This chain is Turripeptide OL184, found in Iotyrris olangoensis (Sea snail).